Reading from the N-terminus, the 208-residue chain is FMN-dependent NADH:quinone oxidoreductase (208 aa).

Residues 17–19, 99–102, and 143–146 contribute to the FMN site; these read SNS, MWNL, and SRGG.

The protein belongs to the azoreductase type 1 family. In terms of assembly, homodimer. FMN is required as a cofactor.

The enzyme catalyses 2 a quinone + NADH + H(+) = 2 a 1,4-benzosemiquinone + NAD(+). The catalysed reaction is N,N-dimethyl-1,4-phenylenediamine + anthranilate + 2 NAD(+) = 2-(4-dimethylaminophenyl)diazenylbenzoate + 2 NADH + 2 H(+). In terms of biological role, quinone reductase that provides resistance to thiol-specific stress caused by electrophilic quinones. Functionally, also exhibits azoreductase activity. Catalyzes the reductive cleavage of the azo bond in aromatic azo compounds to the corresponding amines. The chain is FMN-dependent NADH:quinone oxidoreductase from Staphylococcus carnosus (strain TM300).